The chain runs to 418 residues: Fumarylacetoacetase (418 aa).

Position 127 (aspartate 127) interacts with Ca(2+). Histidine 134 (proton acceptor) is an active-site residue. Ca(2+)-binding residues include glutamate 200, glutamate 202, and aspartate 235. Residues aspartate 235, lysine 255, and threonine 259 each contribute to the Mg(2+) site.

This sequence belongs to the FAH family. Ca(2+) serves as cofactor. Mg(2+) is required as a cofactor. As to expression, highly expressed in the intestine and the hypodermis.

It catalyses the reaction 4-fumarylacetoacetate + H2O = acetoacetate + fumarate + H(+). The protein operates within amino-acid degradation; L-phenylalanine degradation; acetoacetate and fumarate from L-phenylalanine: step 6/6. In terms of biological role, fumarylacetoacetase involved in the tyrosine degradation pathway. The protein is Fumarylacetoacetase of Caenorhabditis elegans.